The primary structure comprises 387 residues: S-adenosylmethionine synthase (387 aa).

Residue His17 coordinates ATP. Residue Asp19 participates in Mg(2+) binding. Glu45 is a K(+) binding site. Positions 58 and 101 each coordinate L-methionine. Residues 101–111 (QSPDIAQGVDR) are flexible loop. ATP contacts are provided by residues 168-170 (DAK), 234-235 (RF), Asp243, 249-250 (RK), Ala266, and Lys270. Asp243 is a binding site for L-methionine. Lys274 provides a ligand contact to L-methionine.

The protein belongs to the AdoMet synthase family. Homotetramer; dimer of dimers. It depends on Mg(2+) as a cofactor. K(+) serves as cofactor.

The protein localises to the cytoplasm. The catalysed reaction is L-methionine + ATP + H2O = S-adenosyl-L-methionine + phosphate + diphosphate. It functions in the pathway amino-acid biosynthesis; S-adenosyl-L-methionine biosynthesis; S-adenosyl-L-methionine from L-methionine: step 1/1. In terms of biological role, catalyzes the formation of S-adenosylmethionine (AdoMet) from methionine and ATP. The overall synthetic reaction is composed of two sequential steps, AdoMet formation and the subsequent tripolyphosphate hydrolysis which occurs prior to release of AdoMet from the enzyme. The sequence is that of S-adenosylmethionine synthase from Bordetella petrii (strain ATCC BAA-461 / DSM 12804 / CCUG 43448).